Here is a 925-residue protein sequence, read N- to C-terminus: Colossin-D (925 aa).

The N-terminal stretch at methionine 1 to cysteine 26 is a signal peptide. Asparagine 47, asparagine 95, asparagine 142, asparagine 166, asparagine 283, asparagine 334, asparagine 344, asparagine 378, asparagine 401, asparagine 511, and asparagine 642 each carry an N-linked (GlcNAc...) asparagine glycan.

This sequence belongs to the serine-aspartate repeat-containing protein (SDr) family.

The protein localises to the secreted. The polypeptide is Colossin-D (colD) (Dictyostelium discoideum (Social amoeba)).